The following is a 263-amino-acid chain: MIVGQHIPGTSYLHRSSAVAKIIFAFCFIPLVFLANNAATNIFLLLFTFFALASSKLPIRYVLKGLRPILFLIIFTFIIQLLFTREGAVLFEFGWFKIYEEGLRLAIIVSLRFFYLVSITTLVTLTTSPIELTDAIELLLKPFKVVRVPTHEIALMLSISLRFLPTLAEETEKIMKAQQARGVDLSAGPIKERLRAIIPLLIPLFISAFKRAEDLATAMEARGYRGGEGRTRLRESKWTTRDTGLILLLVALGLLLVYLRGGF.

The next 4 helical transmembrane spans lie at 22–42 (IIFAFCFIPLVFLANNAATNI), 69–89 (ILFLIIFTFIIQLLFTREGAV), 105–125 (LAIIVSLRFFYLVSITTLVTL), and 243–263 (TGLILLLVALGLLLVYLRGGF).

Belongs to the energy-coupling factor EcfT family. In terms of assembly, forms a stable energy-coupling factor (ECF) transporter complex composed of 2 membrane-embedded substrate-binding proteins (S component), 2 ATP-binding proteins (A component) and 2 transmembrane proteins (T component). May be able to interact with more than 1 S component at a time.

The protein resides in the cell membrane. Functionally, transmembrane (T) component of an energy-coupling factor (ECF) ABC-transporter complex. Unlike classic ABC transporters this ECF transporter provides the energy necessary to transport a number of different substrates. In Exiguobacterium sibiricum (strain DSM 17290 / CCUG 55495 / CIP 109462 / JCM 13490 / 255-15), this protein is Energy-coupling factor transporter transmembrane protein EcfT.